The primary structure comprises 64 residues: uncharacterized protein (64 aa).

It belongs to the orthopoxviruses VACWR006 protein family.

This is an uncharacterized protein from Vaccinia virus (strain Western Reserve) (VACV).